Here is a 176-residue protein sequence, read N- to C-terminus: DNA-directed RNA polymerase II subunit 7 (176 aa).

It belongs to the eukaryotic RPB7/RPC8 RNA polymerase subunit family. As to quaternary structure, component of the RNA polymerase II complex consisting of at least 12 subunits. Interacts with NRPB4.

Its subcellular location is the nucleus. DNA-dependent RNA polymerase catalyzes the transcription of DNA into RNA using the four ribonucleoside triphosphates as substrates. Component of RNA polymerase II which synthesizes mRNA precursors and many functional non-coding RNAs. Pol II is the central component of the basal RNA polymerase II transcription machinery. It is composed of mobile elements that move relative to each other. NRPB7 is part of a subcomplex with NRPB4 that binds to a pocket formed by NRPB1, NRPB2 and NRPB6 at the base of the clamp element. The NRBP4-NRPB7 subcomplex seems to lock the clamp via NRPB7 in the closed conformation thus preventing double-stranded DNA to enter the active site cleft. The NRPB4-NRPB7 subcomplex binds single-stranded DNA and RNA. The polypeptide is DNA-directed RNA polymerase II subunit 7 (NRPB7) (Arabidopsis thaliana (Mouse-ear cress)).